Consider the following 127-residue polypeptide: ADGIFAIDQFTKVLLNYTGHITWNPPAIFKSYCEIIVTYFPFDEQNCSMKLGTRTYDGTVVAIYPEGPRPDLSNYMQSGEWALKDYRGFWHSVNYSCCLDTPYLDITYHFILLRLPLYFIVNVIIPC.

Residues 1–127 lie on the Extracellular side of the membrane; it reads ADGIFAIDQF…YFIVNVIIPC (127 aa). A disulfide bond links cysteine 33 and cysteine 47. N-linked (GlcNAc...) asparagine glycosylation is found at asparagine 46 and asparagine 94. Cysteines 97 and 98 form a disulfide.

The protein belongs to the ligand-gated ion channel (TC 1.A.9) family. Acetylcholine receptor (TC 1.A.9.1) subfamily. Alpha-1/CHRNA1 sub-subfamily. In terms of assembly, one of the alpha chains that assemble within the acetylcholine receptor, a pentamer of two alpha chains, a beta, a delta, and a gamma or epsilon chains.

It is found in the postsynaptic cell membrane. The protein localises to the cell membrane. It catalyses the reaction K(+)(in) = K(+)(out). The enzyme catalyses Na(+)(in) = Na(+)(out). In terms of biological role, upon acetylcholine binding, the AChR responds by an extensive change in conformation that affects all subunits and leads to opening of an ion-conducting channel across the plasma membrane. Does not bind alpha-bungarotoxin. The sequence is that of Acetylcholine receptor subunit alpha (CHRNA1) from Natrix tessellata (Dice snake).